The following is a 139-amino-acid chain: Putative pre-16S rRNA nuclease (139 aa).

The protein belongs to the YqgF nuclease family.

Its subcellular location is the cytoplasm. In terms of biological role, could be a nuclease involved in processing of the 5'-end of pre-16S rRNA. This chain is Putative pre-16S rRNA nuclease, found in Streptococcus sanguinis (strain SK36).